The chain runs to 779 residues: Nucleus-vacuole junction protein 2 (779 aa).

Topologically, residues 1–2 are cytoplasmic; sequence MF. Residues 3–23 form a helical; Signal-anchor for type II membrane protein membrane-spanning segment; that stretch reads FAFLITYLLGGVTFLPFILFI. Topologically, residues 24–779 are lumenal; sequence YLLTRPTHKS…VRPVPPIPKL (756 aa). N233 carries N-linked (GlcNAc...) asparagine glycosylation. The SMP-LTD domain maps to 238–429; sequence SSPDTDWLNA…MPNMNDLAFF (192 aa). Residues 454 to 465 are compositionally biased toward basic and acidic residues; that stretch reads PAEKDAKAERKK. 2 disordered regions span residues 454-539 and 573-592; these read PAEK…NKSS and LKTKAHKPRSIGGDSSQTTL. At S473 the chain carries Phosphoserine. The segment covering 484–494 has biased composition (polar residues); sequence RSSNSNDTAPS. 2 N-linked (GlcNAc...) asparagine glycosylation sites follow: N489 and N536. N-linked (GlcNAc...) asparagine glycans are attached at residues N640 and N660. Residues 654–779 are disordered; sequence QNAIDFNVTN…VRPVPPIPKL (126 aa). Polar residues predominate over residues 660–674; the sequence is NVTNTHSPSRSISSE. The segment covering 675–691 has biased composition (basic and acidic residues); the sequence is KSYKAAERGQQDKHNDV. Residues 733–750 are compositionally biased toward polar residues; the sequence is GQPTLHPQGQLPIQNVEQ.

It is found in the endoplasmic reticulum membrane. The protein localises to the nucleus membrane. Functionally, during endoplasmic reticulum (ER) stress or when cellular ceramide levels increase, induces contacts between the ER and medial-Golgi complex to facilitate non-vesicular transport of ceramides from the ER to the Golgi complex where they are converted to complex sphingolipids, preventing toxic ceramide accumulation. The protein is Nucleus-vacuole junction protein 2 (nvj2) of Schizosaccharomyces pombe (strain 972 / ATCC 24843) (Fission yeast).